The primary structure comprises 426 residues: 3-phosphoshikimate 1-carboxyvinyltransferase (426 aa).

Positions 20, 21, and 25 each coordinate 3-phosphoshikimate. K20 is a binding site for phosphoenolpyruvate. G92 and R120 together coordinate phosphoenolpyruvate. 3-phosphoshikimate is bound by residues S165, Q167, D313, and K340. Q167 is a binding site for phosphoenolpyruvate. The active-site Proton acceptor is D313. Positions 344 and 386 each coordinate phosphoenolpyruvate.

The protein belongs to the EPSP synthase family. Monomer.

Its subcellular location is the cytoplasm. It carries out the reaction 3-phosphoshikimate + phosphoenolpyruvate = 5-O-(1-carboxyvinyl)-3-phosphoshikimate + phosphate. It functions in the pathway metabolic intermediate biosynthesis; chorismate biosynthesis; chorismate from D-erythrose 4-phosphate and phosphoenolpyruvate: step 6/7. In terms of biological role, catalyzes the transfer of the enolpyruvyl moiety of phosphoenolpyruvate (PEP) to the 5-hydroxyl of shikimate-3-phosphate (S3P) to produce enolpyruvyl shikimate-3-phosphate and inorganic phosphate. This Brevibacillus brevis (strain 47 / JCM 6285 / NBRC 100599) protein is 3-phosphoshikimate 1-carboxyvinyltransferase.